The following is a 431-amino-acid chain: Glutamate-1-semialdehyde 2,1-aminomutase (431 aa).

Lys265 carries the N6-(pyridoxal phosphate)lysine modification.

The protein belongs to the class-III pyridoxal-phosphate-dependent aminotransferase family. HemL subfamily. As to quaternary structure, homodimer. Pyridoxal 5'-phosphate serves as cofactor.

The protein localises to the cytoplasm. It carries out the reaction (S)-4-amino-5-oxopentanoate = 5-aminolevulinate. It functions in the pathway porphyrin-containing compound metabolism; protoporphyrin-IX biosynthesis; 5-aminolevulinate from L-glutamyl-tRNA(Glu): step 2/2. In Vibrio atlanticus (strain LGP32) (Vibrio splendidus (strain Mel32)), this protein is Glutamate-1-semialdehyde 2,1-aminomutase.